A 295-amino-acid chain; its full sequence is GTPase Era (295 aa).

An Era-type G domain is found at Lys-3–Glu-171. The segment at Gly-11–Ser-18 is G1. Gly-11 to Ser-18 is a GTP binding site. The G2 stretch occupies residues Gln-37–Asn-41. Residues Asp-58–Gly-61 are G3. GTP contacts are provided by residues Asp-58 to Met-62 and Asn-120 to Asp-123. Positions Asn-120 to Asp-123 are G4. The segment at Ile-150–Ala-152 is G5. Residues Leu-202–Lys-279 enclose the KH type-2 domain.

This sequence belongs to the TRAFAC class TrmE-Era-EngA-EngB-Septin-like GTPase superfamily. Era GTPase family. Monomer.

It localises to the cytoplasm. It is found in the cell membrane. An essential GTPase that binds both GDP and GTP, with rapid nucleotide exchange. Plays a role in 16S rRNA processing and 30S ribosomal subunit biogenesis and possibly also in cell cycle regulation and energy metabolism. The sequence is that of GTPase Era from Clostridium tetani (strain Massachusetts / E88).